We begin with the raw amino-acid sequence, 328 residues long: GMP reductase (328 aa).

Cys-177 acts as the Thioimidate intermediate in catalysis. NADP(+) is bound at residue 206–229 (IVADGGIRYNGDIAKSIRFGASMV).

This sequence belongs to the IMPDH/GMPR family. GuaC type 2 subfamily.

The enzyme catalyses IMP + NH4(+) + NADP(+) = GMP + NADPH + 2 H(+). Functionally, catalyzes the irreversible NADPH-dependent deamination of GMP to IMP. It functions in the conversion of nucleobase, nucleoside and nucleotide derivatives of G to A nucleotides, and in maintaining the intracellular balance of A and G nucleotides. The polypeptide is GMP reductase (Levilactobacillus brevis (strain ATCC 367 / BCRC 12310 / CIP 105137 / JCM 1170 / LMG 11437 / NCIMB 947 / NCTC 947) (Lactobacillus brevis)).